A 1059-amino-acid polypeptide reads, in one-letter code: Potassium transporter TRK1 (1059 aa).

The Cytoplasmic portion of the chain corresponds to methionine 1 to asparagine 46. A helical transmembrane segment spans residues phenylalanine 47–tyrosine 67. Residues proline 68 to alanine 73 are Extracellular-facing. Residues tyrosine 74 to leucine 90 lie within the membrane without spanning it. At asparagine 91–serine 99 the chain is on the extracellular side. The chain crosses the membrane as a helical span at residues leucine 100 to leucine 122. The Cytoplasmic portion of the chain corresponds to leucine 123–lysine 625. Disordered stretches follow at residues arginine 180 to glutamate 276, isoleucine 304 to aspartate 350, and proline 404 to asparagine 574. The span at serine 186–threonine 203 shows a compositional bias: low complexity. Positions glutamate 236–arginine 245 are enriched in basic and acidic residues. Polar residues predominate over residues proline 335–asparagine 344. Over residues threonine 412–serine 423 the composition is skewed to low complexity. 2 stretches are compositionally biased toward acidic residues: residues aspartate 428–serine 449 and tyrosine 469–glutamate 490. The span at arginine 524–serine 536 shows a compositional bias: polar residues. The span at lysine 540 to arginine 552 shows a compositional bias: basic residues. Polar residues predominate over residues asparagine 556 to serine 566. Residues leucine 626–tryptophan 649 form a helical membrane-spanning segment. At isoleucine 650 to alanine 668 the chain is on the extracellular side. Residues tryptophan 669–threonine 685 lie within the membrane without spanning it. The Extracellular segment spans residues leucine 686 to glutamine 696. A helical membrane pass occupies residues asparagine 697–threonine 713. At glycine 714 to serine 757 the chain is on the cytoplasmic side. Residues valine 758 to leucine 781 traverse the membrane as a helical segment. Over aspartate 782–arginine 796 the chain is Extracellular. An intramembrane segment occupies valine 797 to serine 813. Residues valine 814–leucine 820 are Extracellular-facing. The chain crosses the membrane as a helical span at residues histidine 821–arginine 844. The Cytoplasmic segment spans residues arginine 845–histidine 877. A helical transmembrane segment spans residues leucine 878–alanine 899. Residues glutamate 900 to serine 912 are Extracellular-facing. An intramembrane segment occupies isoleucine 913–methionine 931. At glycine 932–asparagine 945 the chain is on the extracellular side. Residues valine 946–isoleucine 968 form a helical membrane-spanning segment. Residues aspartate 969 to valine 1059 are Cytoplasmic-facing.

Belongs to the TrkH potassium transport family.

It is found in the cell membrane. The catalysed reaction is K(+)(in) = K(+)(out). The enzyme catalyses chloride(in) = chloride(out). Its activity is regulated as follows. TRK1-mediated chloride conductance is blocked by 4,4'-diisothiocyanatostilbene-2,2'-disulfonic acid. Functionally, potassium transporter that mediates K(+) influx, as well as Cl(-) efflux as a secondary function. TRK1 is the major K(+) uptake transporter that regulates membrane potential and intracellular pH. The TRK1-mediated Cl(-) efflux should serve as a Cl(-) detoxification route and may play a role in sustaining C.albicans on mammalian epithelial surfaces, or in physiological saline solutions such as saliva. Mediates candidacidal activities of cysteine-free peptides, but not of defensins. The hallmark of salivary gland-secreted histatin-5 (Hst 5) killing of C.albicans is the rapid efflux of cellular ATP and other small nucleotides and ions from the cell as well as concurrent intracellular uptake of propidium iodide (PI). TRK1 is the channel for Hst 5-induced killing and histatin-5 may directly or indirectly alter TRK1 function, allowing the efflux of larger anions, including ATP, and the influx of small cationic dyes, such as PI. The sequence is that of Potassium transporter TRK1 from Candida albicans (Yeast).